We begin with the raw amino-acid sequence, 145 residues long: Chaperonin GroEL (145 aa).

The protein belongs to the chaperonin (HSP60) family. In terms of assembly, forms a cylinder of 14 subunits composed of two heptameric rings stacked back-to-back. Interacts with the co-chaperonin GroES.

Its subcellular location is the cytoplasm. It catalyses the reaction ATP + H2O + a folded polypeptide = ADP + phosphate + an unfolded polypeptide.. In terms of biological role, together with its co-chaperonin GroES, plays an essential role in assisting protein folding. The GroEL-GroES system forms a nano-cage that allows encapsulation of the non-native substrate proteins and provides a physical environment optimized to promote and accelerate protein folding. The polypeptide is Chaperonin GroEL (Thermus thermophilus).